The primary structure comprises 286 residues: Bifunctional protein FolD (286 aa).

NADP(+)-binding positions include 165 to 167 (GRS), serine 190, and valine 231.

It belongs to the tetrahydrofolate dehydrogenase/cyclohydrolase family. In terms of assembly, homodimer.

The catalysed reaction is (6R)-5,10-methylene-5,6,7,8-tetrahydrofolate + NADP(+) = (6R)-5,10-methenyltetrahydrofolate + NADPH. The enzyme catalyses (6R)-5,10-methenyltetrahydrofolate + H2O = (6R)-10-formyltetrahydrofolate + H(+). Its pathway is one-carbon metabolism; tetrahydrofolate interconversion. Its function is as follows. Catalyzes the oxidation of 5,10-methylenetetrahydrofolate to 5,10-methenyltetrahydrofolate and then the hydrolysis of 5,10-methenyltetrahydrofolate to 10-formyltetrahydrofolate. The sequence is that of Bifunctional protein FolD from Bacillus cereus (strain B4264).